Here is a 963-residue protein sequence, read N- to C-terminus: Putative RNA Helicase B962L (963 aa).

The Helicase ATP-binding domain occupies Ile43–Leu229. Residue Ser56–Ser63 coordinates ATP. The DEAH box motif lies at Asp167 to His170. A Helicase C-terminal domain is found at Ala253–Phe459. The helical transmembrane segment at Gly521 to Val541 threads the bilayer.

It belongs to the DEAD box helicase family. DEAH subfamily.

It is found in the host membrane. The protein localises to the virion. It carries out the reaction ATP + H2O = ADP + phosphate + H(+). The chain is Putative RNA Helicase B962L from African swine fever virus (isolate Tick/Malawi/Lil 20-1/1983) (ASFV).